The primary structure comprises 259 residues: Ribosomal RNA small subunit methyltransferase J (259 aa).

S-adenosyl-L-methionine-binding positions include 101 to 102 (RD), 117 to 118 (ER), 153 to 154 (SS), and Asp176.

It belongs to the methyltransferase superfamily. RsmJ family.

It localises to the cytoplasm. The catalysed reaction is guanosine(1516) in 16S rRNA + S-adenosyl-L-methionine = N(2)-methylguanosine(1516) in 16S rRNA + S-adenosyl-L-homocysteine + H(+). Specifically methylates the guanosine in position 1516 of 16S rRNA. This chain is Ribosomal RNA small subunit methyltransferase J, found in Aliivibrio fischeri (strain MJ11) (Vibrio fischeri).